Here is a 773-residue protein sequence, read N- to C-terminus: MRRPRSRGAAKQTRLREADEIRLLEAWIDAGKPARGTRPPPLSKSSSSPADTAAAKRGAKGAGGVPSKAAGEHPEYGACARFDELPLSNKTKDGLRKAGYTEMSEIQRAALPHALCGRDVLGAAKTGSGKTLAFVIPVLEKLYRERWGPEDGVGCIVLSPNKDLAGQIFNVFQKVGKLHGFSAACIVGNRKGLDEEKAVINNMNILVCTPGRLLQHMGETTNFDCSQIQQILVIDEADQVLDKNFQEQVDNVVSQLPKVRQTLLFSATQTKSVKDLARVSLKDPEYISVHEEATTATPDTLEQYAMIVPLEQKLNMLWSFIKRHLKSRILVFLSSVKQVKFVYEVFKKLRPGISLRCMHGRMKYEVQQAIVAEFKEGHSVLFSTDIFARGLDIEDVDWVVQVDCPENIALYIHRVGRTARYNKRGKALIFLCPEEEKMLEKLKAAESKIPIHIKKPNTEQLQQISQNIASVLVQYPNLQQLGKRAFVTYLKSVYLQSDKEVFDLSRFSMENFAAYAASLGLPVTPKIRFVSHKKNVPKKYMGDIDVKRMKRSSKPEVIEINPQAKSNLIEDDGDYDILYPKEQQTDVNMADGLDDVLYPKVSTADTNNEPEKVTQLGNKSVKKKKLKINVHRPLGTRVKFDDEGHTIPPFASIAEEVGSGDVIDKDKISQRYAEMLREMQEHDKEDKLEHKRILREKKLQKKLKLKRKRNEEMDAGSENSGSESDRDQRTASKGKKRYFNSDDEEGSKDAAKDGDVLAQQEALALKLLSKMHS.

Residues 28 to 71 are disordered; the sequence is IDAGKPARGTRPPPLSKSSSSPADTAAAKRGAKGAGGVPSKAAG. A compositionally biased stretch (low complexity) spans 43–56; it reads SKSSSSPADTAAAK. The Q motif signature appears at 80-108; that stretch reads ARFDELPLSNKTKDGLRKAGYTEMSEIQR. In terms of domain architecture, Helicase ATP-binding spans 111 to 287; that stretch reads LPHALCGRDV…RVSLKDPEYI (177 aa). 124–131 is a binding site for ATP; it reads AKTGSGKT. The short motif at 235–238 is the DEAD box element; the sequence is DEAD. Residues 309-462 enclose the Helicase C-terminal domain; it reads PLEQKLNMLW…IKKPNTEQLQ (154 aa). A coiled-coil region spans residues 664–715; the sequence is DKDKISQRYAEMLREMQEHDKEDKLEHKRILREKKLQKKLKLKRKRNEEMDA. Positions 699–708 are enriched in basic residues; sequence LQKKLKLKRK. The tract at residues 699 to 755 is disordered; that stretch reads LQKKLKLKRKRNEEMDAGSENSGSESDRDQRTASKGKKRYFNSDDEEGSKDAAKDGD.

Belongs to the DEAD box helicase family. DDX10/DBP4 subfamily.

The enzyme catalyses ATP + H2O = ADP + phosphate + H(+). This is DEAD-box ATP-dependent RNA helicase 32 from Oryza sativa subsp. japonica (Rice).